The primary structure comprises 287 residues: UPF0098 protein AF_1698 (287 aa).

This sequence belongs to the UPF0098 family.

The protein is UPF0098 protein AF_1698 of Archaeoglobus fulgidus (strain ATCC 49558 / DSM 4304 / JCM 9628 / NBRC 100126 / VC-16).